Consider the following 216-residue polypeptide: Endo-1,4-beta-xylanase 2 (216 aa).

A signal peptide spans 1–27; it reads MVSFSSLFVAACAAVTAFALPNELEKR. The 189-residue stretch at 28-216 folds into the GH11 domain; that stretch reads AITSNEQGTN…SSGSASITVS (189 aa). An N-linked (GlcNAc...) asparagine glycan is attached at asparagine 87. Glutamate 112 functions as the Nucleophile in the catalytic mechanism. Residue glutamate 203 is the Proton donor of the active site.

This sequence belongs to the glycosyl hydrolase 11 (cellulase G) family.

It is found in the secreted. It carries out the reaction Endohydrolysis of (1-&gt;4)-beta-D-xylosidic linkages in xylans.. Its pathway is glycan degradation; xylan degradation. Functionally, endo-1,4-beta-xylanase involved in the hydrolysis of xylan, a major structural heterogeneous polysaccharide found in plant biomass representing the second most abundant polysaccharide in the biosphere, after cellulose. The protein is Endo-1,4-beta-xylanase 2 (xyn2) of Rhizopus oryzae (Mucormycosis agent).